Consider the following 202-residue polypeptide: N-(5'-phosphoribosyl)anthranilate isomerase (202 aa).

It belongs to the TrpF family.

The catalysed reaction is N-(5-phospho-beta-D-ribosyl)anthranilate = 1-(2-carboxyphenylamino)-1-deoxy-D-ribulose 5-phosphate. It functions in the pathway amino-acid biosynthesis; L-tryptophan biosynthesis; L-tryptophan from chorismate: step 3/5. This is N-(5'-phosphoribosyl)anthranilate isomerase from Listeria monocytogenes serotype 4a (strain HCC23).